The following is a 255-amino-acid chain: MCNVHAQQGSAQEAPPPGELLLIDKPLDWTSFDVVAKVRNTYRKCGSKRKVGHCGTLDPKATGLLIVATGRKTKEISQLEQLDKVYDGVIKLGAITASHDTETPEEQLCDVAHLSEAELHAVAATFIGNRLQQPPMHSAAWHNGRRLYEHARKGEVIRERKAREIVVHRFTITNVALPFVSFELHVSKGAYIRVIADEFGAALGVGGYLAALRRTAIGEWQLTNALSVNDTIEQIHNNASKGALCGTASTIHPAT.

Residue Asp58 is the Nucleophile of the active site.

It belongs to the pseudouridine synthase TruB family. Type 1 subfamily.

It catalyses the reaction uridine(55) in tRNA = pseudouridine(55) in tRNA. Functionally, responsible for synthesis of pseudouridine from uracil-55 in the psi GC loop of transfer RNAs. The sequence is that of tRNA pseudouridine synthase B from Chlorobium chlorochromatii (strain CaD3).